Consider the following 507-residue polypeptide: BPI fold-containing family C protein (507 aa).

The first 23 residues, 1–23, serve as a signal peptide directing secretion; that stretch reads MCTKTIPVLWGCFLLWNLYVSSS. Residues N79, N92, and N113 are each glycosylated (N-linked (GlcNAc...) asparagine). C161 and C200 are oxidised to a cystine. Residues N213, N225, N257, N301, N355, N372, and N415 are each glycosylated (N-linked (GlcNAc...) asparagine).

This sequence belongs to the BPI/LBP/Plunc superfamily. BPI/LBP family. In terms of tissue distribution, detected in the basal layer of the epidermis from inflammatory skin from psoriasis patients, but not in normal skin.

Its subcellular location is the secreted. The chain is BPI fold-containing family C protein (BPIFC) from Homo sapiens (Human).